The primary structure comprises 181 residues: Adenine phosphoribosyltransferase (181 aa).

The protein belongs to the purine/pyrimidine phosphoribosyltransferase family. In terms of assembly, homodimer.

The protein resides in the cytoplasm. It carries out the reaction AMP + diphosphate = 5-phospho-alpha-D-ribose 1-diphosphate + adenine. The protein operates within purine metabolism; AMP biosynthesis via salvage pathway; AMP from adenine: step 1/1. In terms of biological role, catalyzes a salvage reaction resulting in the formation of AMP, that is energically less costly than de novo synthesis. This is Adenine phosphoribosyltransferase from Acidobacterium capsulatum (strain ATCC 51196 / DSM 11244 / BCRC 80197 / JCM 7670 / NBRC 15755 / NCIMB 13165 / 161).